The sequence spans 303 residues: Phosphatidylglycerol--prolipoprotein diacylglyceryl transferase (303 aa).

Transmembrane regions (helical) follow at residues 18–38 (LGPF…LVGL), 58–78 (LLPI…VAFE), 106–126 (IWGG…SIIF), and 133–153 (EPFW…QAIG). Arginine 154 provides a ligand contact to a 1,2-diacyl-sn-glycero-3-phospho-(1'-sn-glycerol). The next 3 membrane-spanning stretches (helical) occupy residues 193 to 213 (PTFL…IFLF), 223 to 243 (LPPG…RFWI), and 266 to 286 (IAQL…WRIY).

Belongs to the Lgt family.

It is found in the cell inner membrane. The catalysed reaction is L-cysteinyl-[prolipoprotein] + a 1,2-diacyl-sn-glycero-3-phospho-(1'-sn-glycerol) = an S-1,2-diacyl-sn-glyceryl-L-cysteinyl-[prolipoprotein] + sn-glycerol 1-phosphate + H(+). It functions in the pathway protein modification; lipoprotein biosynthesis (diacylglyceryl transfer). Catalyzes the transfer of the diacylglyceryl group from phosphatidylglycerol to the sulfhydryl group of the N-terminal cysteine of a prolipoprotein, the first step in the formation of mature lipoproteins. This Prochlorococcus marinus (strain NATL1A) protein is Phosphatidylglycerol--prolipoprotein diacylglyceryl transferase.